The following is a 562-amino-acid chain: Membrane protein insertase YidC (562 aa).

A helical membrane pass occupies residues 4-24; that stretch reads QRIFLFLALSILGLLLWTSWE. Positions 33-71 are disordered; it reads TEEVVEAEDDVPAPAETPDEAPDPADGETPARDRAEVED. Over residues 35–58 the composition is skewed to acidic residues; that stretch reads EVVEAEDDVPAPAETPDEAPDPAD. Residues 61-71 are compositionally biased toward basic and acidic residues; that stretch reads TPARDRAEVED. 4 consecutive transmembrane segments (helical) span residues 330–350, 356–376, 426–446, and 499–519; these read MTLS…FWLL, IVGN…LAFY, LGGC…YWVL, and IMMA…AGLV.

It belongs to the OXA1/ALB3/YidC family. Type 1 subfamily. As to quaternary structure, interacts with the Sec translocase complex via SecD. Specifically interacts with transmembrane segments of nascent integral membrane proteins during membrane integration.

The protein resides in the cell inner membrane. Functionally, required for the insertion and/or proper folding and/or complex formation of integral membrane proteins into the membrane. Involved in integration of membrane proteins that insert both dependently and independently of the Sec translocase complex, as well as at least some lipoproteins. Aids folding of multispanning membrane proteins. The protein is Membrane protein insertase YidC of Alkalilimnicola ehrlichii (strain ATCC BAA-1101 / DSM 17681 / MLHE-1).